The primary structure comprises 195 residues: Ribosomal RNA small subunit methyltransferase G (195 aa).

S-adenosyl-L-methionine contacts are provided by residues Gly60, Leu65, 114–115, and Arg128; that span reads IE.

This sequence belongs to the methyltransferase superfamily. RNA methyltransferase RsmG family.

The protein resides in the cytoplasm. It catalyses the reaction guanosine(527) in 16S rRNA + S-adenosyl-L-methionine = N(7)-methylguanosine(527) in 16S rRNA + S-adenosyl-L-homocysteine. Functionally, specifically methylates the N7 position of guanine in position 527 of 16S rRNA. In Dinoroseobacter shibae (strain DSM 16493 / NCIMB 14021 / DFL 12), this protein is Ribosomal RNA small subunit methyltransferase G.